The primary structure comprises 241 residues: Ubiquinone biosynthesis O-methyltransferase (241 aa).

Arg46, Gly66, Asp87, and Met131 together coordinate S-adenosyl-L-methionine.

The protein belongs to the methyltransferase superfamily. UbiG/COQ3 family.

It carries out the reaction a 3-demethylubiquinol + S-adenosyl-L-methionine = a ubiquinol + S-adenosyl-L-homocysteine + H(+). The enzyme catalyses a 3-(all-trans-polyprenyl)benzene-1,2-diol + S-adenosyl-L-methionine = a 2-methoxy-6-(all-trans-polyprenyl)phenol + S-adenosyl-L-homocysteine + H(+). Its pathway is cofactor biosynthesis; ubiquinone biosynthesis. O-methyltransferase that catalyzes the 2 O-methylation steps in the ubiquinone biosynthetic pathway. This is Ubiquinone biosynthesis O-methyltransferase from Bordetella parapertussis (strain 12822 / ATCC BAA-587 / NCTC 13253).